The chain runs to 2169 residues: Voltage-dependent L-type calcium channel subunit alpha-1C (2169 aa).

At 1–153 the chain is on the cytoplasmic side; the sequence is MVPLVQPTTP…RACISIVEWK (153 aa). Residues 76–97 form a calmodulin-binding region; it reads GAALSWQAAIDAGRQAKLMGSA. Residues 98–108 are compositionally biased toward polar residues; it reads GNTTISTVSST. A disordered region spans residues 98–127; that stretch reads GNTTISTVSSTQRKRQQYGKPKKQSGTTAT. The segment covering 109 to 120 has biased composition (basic residues); sequence QRKRQQYGKPKK. The I repeat unit spans residues 140–437; sequence NPIRRACISI…LVLGVLSGEF (298 aa). A helical membrane pass occupies residues 154–172; sequence PFEIIILLTIFANCVALAI. Topologically, residues 173–187 are extracellular; the sequence is YIPFPEDDSNATNSN. N182 carries an N-linked (GlcNAc...) asparagine glycan. Residues 188 to 208 form a helical membrane-spanning segment; it reads LERVEYLFLIIFTVEAFLKVI. Residues 209 to 217 lie on the Cytoplasmic side of the membrane; the sequence is AYGLLFHPN. Residues 218–238 traverse the membrane as a helical segment; the sequence is AYLRNGWNLLDFIIVVVGLFS. Residues 239 to 261 are Extracellular-facing; that stretch reads AILEQATKADGANALGGKGAGFD. Residues 262 to 280 traverse the membrane as a helical segment; sequence VKALRAFRVLRPLRLVSGV. Over 281–297 the chain is Cytoplasmic; that stretch reads PSLQVVLNSIIKAMVPL. Residues 298–319 traverse the membrane as a helical segment; that stretch reads LHTALLVLFVIIIYAIIGLELF. At 320 to 379 the chain is on the extracellular side; sequence MGKMHKTCYNQEGITDVPAEEDPSPCALESGHGRQCQNGTVCKPGWDGPKHGITNFDNFA. Residues C345 and C361 are joined by a disulfide bond. An N-linked (GlcNAc...) asparagine glycan is attached at N357. The pore-forming intramembrane region spans 380–401; the sequence is FAMLTVFQCITMEGWTDVLYWM. The Selectivity filter of repeat I signature appears at 390 to 393; the sequence is TMEG. Ca(2+) is bound at residue E392. The Extracellular segment spans residues 402–409; it reads QDAMGYEL. The chain crosses the membrane as a helical span at residues 410–430; it reads PWVYFVSLVIFGSFFVLNLVL. Residues 431–553 are Cytoplasmic-facing; that stretch reads GVLSGEFSKE…RKCRAAVKSN (123 aa). Positions 457 to 474 are AID/alpha-interaction domain; mediates interaction with the beta subunit; that stretch reads QQLEEDLKGYLDWITQAE. Positions 478–510 are disordered; it reads PENEDEGVDEEKPRNMSMPTSETESVNTENVAG. Over residues 494-507 the composition is skewed to polar residues; the sequence is SMPTSETESVNTEN. S498 is modified (phosphoserine). T505 bears the Phosphothreonine mark. Residues 539–785 form an II repeat; sequence NRFCRRKCRA…VFLAIAVDNL (247 aa). A helical membrane pass occupies residues 554-572; it reads VFYWLVIFLVFLNTLTIAS. The Extracellular portion of the chain corresponds to 573 to 583; the sequence is EHYNQPHWLTE. Residues 584–604 traverse the membrane as a helical segment; sequence VQDTANKALLALFTAEMLLKM. Residues 605-615 lie on the Cytoplasmic side of the membrane; sequence YSLGLQAYFVS. The chain crosses the membrane as a helical span at residues 616-635; that stretch reads LFNRLDCFIVCGGILETILV. The Extracellular portion of the chain corresponds to 636-644; sequence ETKIMSPLG. A helical membrane pass occupies residues 645–663; the sequence is ISVLRCVRLLRIFKITRYW. Over 664-682 the chain is Cytoplasmic; that stretch reads NSLSNLVASLLNSVRSIAS. A helical membrane pass occupies residues 683 to 702; that stretch reads LLLLLFLFIIIFSLLGMQLF. Topologically, residues 703-722 are extracellular; that stretch reads GGKFNFDEMRTRRSTFDNFP. The segment at residues 723–744 is an intramembrane region (pore-forming); that stretch reads QSLLTVFQILTGEDWNSVMYDG. The Selectivity filter of repeat II motif lies at 733–736; it reads TGED. E735 contributes to the Ca(2+) binding site. Residues 745-754 lie on the Extracellular side of the membrane; the sequence is IMAYGGPSFP. A helical transmembrane segment spans residues 755-774; it reads GMLVCIYFIILFICGNYILL. Topologically, residues 775 to 929 are cytoplasmic; sequence NVFLAIAVDN…LQCHRIVNDT (155 aa). The tract at residues 793–890 is disordered; that stretch reads SAQKEEEEEK…EMPVGPRPRP (98 aa). Residues 812-835 are compositionally biased toward basic and acidic residues; the sequence is SPEKKQEVVEKPAVEETKEEKIEL. 2 positions are modified to phosphoserine: S837 and S844. The tract at residues 858–905 is interaction with STAC2; it reads NENEDKSPYPNPDAAGEEDEEEPEMPVGPRPRPLSELHLKEKAVPMPE. Positions 872–881 are enriched in acidic residues; sequence AGEEDEEEPE. The III repeat unit spans residues 916–1198; that stretch reads NRFRLQCHRI…IFVGFVIVTF (283 aa). A helical membrane pass occupies residues 930 to 948; sequence IFTNLILFFILLSSISLAA. Over 949–960 the chain is Extracellular; it reads EDPVQHTSFRNH. The helical transmembrane segment at 961-980 threads the bilayer; the sequence is ILFYFDIVFTTIFTIEIALK. Residues 981–996 are Cytoplasmic-facing; sequence MTAYGAFLHKGSFCRN. Residues 997-1015 traverse the membrane as a helical segment; it reads YFNILDLLVVSVSLISFGI. Over 1016 to 1022 the chain is Extracellular; it reads QSSAINV. The helical transmembrane segment at 1023–1041 threads the bilayer; that stretch reads VKILRVLRVLRPLRAINRA. At 1042 to 1060 the chain is on the cytoplasmic side; sequence KGLKHVVQCVFVAIRTIGN. The chain crosses the membrane as a helical span at residues 1061–1080; that stretch reads IVIVTTLLQFMFACIGVQLF. At 1081-1130 the chain is on the extracellular side; sequence KGKLYTCSDSSKQTEAECKGNYITYKDGEVDQPIIQPRSWENSKFDFDNV. C1087 and C1098 are disulfide-bonded. The tract at residues 1118 to 1207 is dihydropyridine binding; sequence RSWENSKFDF…FQEQGEQEYK (90 aa). An intramembrane region (pore-forming) is located at residues 1131–1151; sequence LAAMMALFTVSTFEGWPELLY. A Selectivity filter of repeat III motif is present at residues 1142–1145; it reads TFEG. E1144 lines the Ca(2+) pocket. Residues 1152-1168 lie on the Extracellular side of the membrane; that stretch reads RSIDSHTEDKGPIYNYR. A helical membrane pass occupies residues 1169 to 1190; that stretch reads VEISIFFIIYIIIIAFFMMNIF. Over 1191–1248 the chain is Cytoplasmic; sequence VGFVIVTFQEQGEQEYKNCELDKNQRQCVEYALKARPLRRYIPKNQHQYKVWYVVNST. Residues 1235-1508 form an IV repeat; the sequence is NQHQYKVWYV…LFVAVVMDNF (274 aa). A helical transmembrane segment spans residues 1249–1270; the sequence is YFEYLMFVLILLNTICLAMQHY. Residues 1271-1278 lie on the Extracellular side of the membrane; the sequence is GQSCLFKI. The chain crosses the membrane as a helical span at residues 1279–1300; sequence AMNILNMLFTGLFTVEMILKLI. Residues 1301 to 1310 lie on the Cytoplasmic side of the membrane; that stretch reads AFKPKHYFCD. Residues 1311 to 1330 form a helical membrane-spanning segment; that stretch reads AWNTFDALIVVGSIVDIAIT. Residues 1331 to 1353 lie on the Extracellular side of the membrane; the sequence is EVNPAEHTQCSPSMNAEENSRIS. A helical transmembrane segment spans residues 1354 to 1372; that stretch reads ITFFRLFRVMRLVKLLSRG. Residues 1373-1390 lie on the Cytoplasmic side of the membrane; that stretch reads EGIRTLLWTFIKSFQALP. Residues 1391–1411 form a helical membrane-spanning segment; the sequence is YVALLIVMLFFIYAVIGMQVF. At 1412-1433 the chain is on the extracellular side; sequence GKIALNDTTEINRNNNFQTFPQ. N-linked (GlcNAc...) asparagine glycosylation is present at N1417. The pore-forming intramembrane region spans 1434 to 1452; it reads AVLLLFRCATGEAWQDIML. The short motif at 1443 to 1446 is the Selectivity filter of repeat IV element; sequence TGEA. Topologically, residues 1453 to 1480 are extracellular; that stretch reads ACMPGKKCAPESDPSNSTEGETPCGSSF. The interval 1459–1527 is dihydropyridine binding; the sequence is KCAPESDPSN…LGPHHLDEFK (69 aa). Cysteines 1460 and 1476 form a disulfide. The N-linked (GlcNAc...) asparagine glycan is linked to N1468. The tract at residues 1473–1515 is phenylalkylamine binding; sequence ETPCGSSFAVFYFISFYMLCAFLIINLFVAVVMDNFDYLTRDW. Residues 1481–1505 form a helical membrane-spanning segment; the sequence is AVFYFISFYMLCAFLIINLFVAVVM. The Cytoplasmic portion of the chain corresponds to 1506 to 2169; it reads DNFDYLTRDW…ADSRVHVRSL (664 aa). The important for interaction with STAC1, STAC2 and STAC3 stretch occupies residues 1640-1667; it reads DEVTVGKFYATFLIQEYFRKFKKRKEQG. The tract at residues 1646–1666 is calmodulin-binding IQ region; sequence KFYATFLIQEYFRKFKKRKEQ. The segment at 1680 to 1699 is important for localization in at the junctional membrane; the sequence is LQAGLRTLHDIGPEIRRAIS. Phosphoserine is present on residues S1699 and S1720. Disordered regions lie at residues 1761–1793 and 1894–1920; these read KAGN…TGSN and ENRQ…LRSA. A compositionally biased stretch (polar residues) spans 1780–1792; it reads STFTPSSYSSTGS. A compositionally biased stretch (basic and acidic residues) spans 1894–1910; that stretch reads ENRQLTPPEEDKGDTRP. At S1927 the chain carries Phosphoserine.

It belongs to the calcium channel alpha-1 subunit (TC 1.A.1.11) family. CACNA1C subfamily. As to quaternary structure, component of a calcium channel complex consisting of a pore-forming alpha subunit (CACNA1C) and ancillary beta, gamma and delta subunits. The channel complex contains alpha, beta, gamma and delta subunits in a 1:1:1:1 ratio, i.e. it contains only one of each type of subunit. CACNA1C channel activity is modulated by ancillary subunits, such as CACNB1, CACNB2, CACNB3, CACNA2D1 and CACNA2D4. Interacts with CACNB1. Interacts with CACNB2. Identified in a complex with CACNA2D4 and CACNB3. Interacts with CACNB3. Interacts with CACNA2D1. Interacts with CACNA2D4. Interacts with the gamma subunits CACNG4, CACNG6, CACNG7 and CACNG8. Interacts with CALM1. Interacts (via the N-terminus and the C-terminal C and IQ motifs) with CABP1; this inhibits Ca(2+)-dependent channel inactivation. The binding via the C motif is calcium independent whereas the binding via IQ requires the presence of calcium and is mutually exclusive with calmodulin binding. The binding to the cytoplasmic N-terminal domain is calcium independent but is essential for the channel modulation. Interacts (via C-terminal CDB motif) with CABP5; in a calcium-dependent manner. Interacts with CIB1; the interaction increases upon cardiomyocytes hypertrophy. Interacts with STAC2 and STAC3; this inhibits channel inactivation. Post-translationally, phosphorylation by PKA at Ser-1927 activates the channel. Elevated levels of blood glucose lead to increased phosphorylation by PKA. Expressed in heart. Expressed in uterus.

It localises to the cell membrane. It is found in the sarcolemma. Its subcellular location is the perikaryon. The protein localises to the postsynaptic density membrane. The protein resides in the cell projection. It localises to the dendrite. It is found in the T-tubule. It catalyses the reaction Ca(2+)(in) = Ca(2+)(out). Its activity is regulated as follows. Inhibited by dihydropyridines (DHP), such as isradipine. Inhibited by nifedipine. Channel activity is regulated by Ca(2+) and calmodulin. Binding of STAC1, STAC2 or STAC3 to a region that overlaps with the calmodulin binding site inhibits channel inactivation by Ca(2+) and calmodulin. Binding of calmodulin or CABP1 at the same regulatory sites results in opposite effects on the channel function. Shear stress and pressure increases calcium channel activity. Its function is as follows. Pore-forming, alpha-1C subunit of the voltage-gated calcium channel that gives rise to L-type calcium currents. Mediates influx of calcium ions into the cytoplasm, and thereby triggers calcium release from the sarcoplasm. Plays an important role in excitation-contraction coupling in the heart. Required for normal heart development and normal regulation of heart rhythm. Required for normal contraction of smooth muscle cells in blood vessels and in the intestine. Essential for normal blood pressure regulation via its role in the contraction of arterial smooth muscle cells. Long-lasting (L-type) calcium channels belong to the 'high-voltage activated' (HVA) group. The chain is Voltage-dependent L-type calcium channel subunit alpha-1C (CACNA1C) from Cavia porcellus (Guinea pig).